A 289-amino-acid polypeptide reads, in one-letter code: Pantothenate synthetase (289 aa).

30–37 lines the ATP pocket; that stretch reads MGYLHKGH. His37 acts as the Proton donor in catalysis. (R)-pantoate is bound at residue Gln61. Gln61 contributes to the beta-alanine binding site. Residue 147–150 coordinates ATP; it reads GEKD. Gln153 is a (R)-pantoate binding site. ATP contacts are provided by residues Val176 and 184 to 187; that span reads CSSR.

It belongs to the pantothenate synthetase family. As to quaternary structure, homodimer.

It is found in the cytoplasm. The catalysed reaction is (R)-pantoate + beta-alanine + ATP = (R)-pantothenate + AMP + diphosphate + H(+). It functions in the pathway cofactor biosynthesis; (R)-pantothenate biosynthesis; (R)-pantothenate from (R)-pantoate and beta-alanine: step 1/1. Its function is as follows. Catalyzes the condensation of pantoate with beta-alanine in an ATP-dependent reaction via a pantoyl-adenylate intermediate. The chain is Pantothenate synthetase from Allorhizobium ampelinum (strain ATCC BAA-846 / DSM 112012 / S4) (Agrobacterium vitis (strain S4)).